A 257-amino-acid chain; its full sequence is Thiazole synthase (257 aa).

The active-site Schiff-base intermediate with DXP is lysine 96. Residues glycine 157, 184–185 (AG), and 206–207 (NT) each bind 1-deoxy-D-xylulose 5-phosphate.

This sequence belongs to the ThiG family. Homotetramer. Forms heterodimers with either ThiH or ThiS.

The protein localises to the cytoplasm. It catalyses the reaction [ThiS sulfur-carrier protein]-C-terminal-Gly-aminoethanethioate + 2-iminoacetate + 1-deoxy-D-xylulose 5-phosphate = [ThiS sulfur-carrier protein]-C-terminal Gly-Gly + 2-[(2R,5Z)-2-carboxy-4-methylthiazol-5(2H)-ylidene]ethyl phosphate + 2 H2O + H(+). Its pathway is cofactor biosynthesis; thiamine diphosphate biosynthesis. Its function is as follows. Catalyzes the rearrangement of 1-deoxy-D-xylulose 5-phosphate (DXP) to produce the thiazole phosphate moiety of thiamine. Sulfur is provided by the thiocarboxylate moiety of the carrier protein ThiS. In vitro, sulfur can be provided by H(2)S. The chain is Thiazole synthase from Allorhizobium ampelinum (strain ATCC BAA-846 / DSM 112012 / S4) (Agrobacterium vitis (strain S4)).